Consider the following 371-residue polypeptide: Probable alcohol acetyltransferase (371 aa).

Residues Ser-124 and His-295 each act as charge relay system in the active site. Positions 325–352 (AKALEESPKESYSRPPAHQQPLHKNDFT) are disordered. The segment covering 327 to 336 (ALEESPKESY) has biased composition (basic and acidic residues).

Belongs to the AB hydrolase superfamily.

Functionally, probable alcohol acetyltransferase that uses acetyl-CoA to synthesize acetate esters from various alcohols. Not involved in the synthesis of ethyl acetate. The protein is Probable alcohol acetyltransferase (EAT2) of Cyberlindnera fabianii (Yeast).